The primary structure comprises 119 residues: DNA-binding protein inhibitor ID-3 (119 aa).

In terms of domain architecture, bHLH spans 28 to 80 (RGKSPAAEEPLSLLDDMNHCYSRLRELVPGVPRGTQLSQVEILQRVIDYILDL).

Homodimer, and heterodimer with other HLH proteins. Interacts with COPS5 and COPS7A. Interacts with IFI204. Interacts with GATA4 and NKX2-5. Interacts with ANKRD2; both proteins cooperate in myoblast differentiation. Interacts with CLOCK and BMAL1.

Its subcellular location is the nucleus. Functionally, transcriptional regulator (lacking a basic DNA binding domain) which negatively regulates the basic helix-loop-helix (bHLH) transcription factors by forming heterodimers and inhibiting their DNA binding and transcriptional activity. Implicated in regulating a variety of cellular processes, including cellular growth, senescence, differentiation, apoptosis, angiogenesis, and neoplastic transformation. Involved in myogenesis by inhibiting skeletal muscle and cardiac myocyte differentiation and promoting muscle precursor cells proliferation. Inhibits the binding of E2A-containing protein complexes to muscle creatine kinase E-box enhancer. Regulates the circadian clock by repressing the transcriptional activator activity of the CLOCK-BMAL1 heterodimer. The sequence is that of DNA-binding protein inhibitor ID-3 (ID3) from Bos taurus (Bovine).